Consider the following 362-residue polypeptide: Peptide chain release factor 1 (362 aa).

Q240 carries the post-translational modification N5-methylglutamine.

It belongs to the prokaryotic/mitochondrial release factor family. Methylated by PrmC. Methylation increases the termination efficiency of RF1.

Its subcellular location is the cytoplasm. In terms of biological role, peptide chain release factor 1 directs the termination of translation in response to the peptide chain termination codons UAG and UAA. The polypeptide is Peptide chain release factor 1 (Bifidobacterium longum subsp. infantis (strain ATCC 15697 / DSM 20088 / JCM 1222 / NCTC 11817 / S12)).